The following is a 365-amino-acid chain: MDATTRVELGENSYDIAIAKESLQQIGTFLRPLDLGQKVLIVSNPEIYGHYGETVVNSLQAAGFSVDTHLIPAGEQYKNLASIEKIYDTAFKNRLERSSTLLALGGGVIGDMTGFAAATWLRGINFVQVPTTLLAMVDASVGGKTGVNHPQGKNLIGAFYQPKFVLIDPTVLKTLPVREFRAGMAEVIKYGVIWDADLFTKLEAAEQIDSYATIDPDLLDLILERSCRAKAEVVSQDERESGLRAILNYGHTLGHAVESLTHYETFVHGEGVAIGMALAGAIATRMNLWTTAETQRQDALIKKAGLPTECPNNLAIEAILETLQSDKKVKSGKVRFVLPTKIGEVLITDQVSADLITDVLAPALC.

Residues 107–111 (GVIGD), 131–132 (TT), Lys144, and Lys153 each bind NAD(+). Residues Glu186, His251, and His268 each contribute to the Zn(2+) site.

It belongs to the sugar phosphate cyclases superfamily. Dehydroquinate synthase family. The cofactor is Co(2+). Requires Zn(2+) as cofactor. It depends on NAD(+) as a cofactor.

It is found in the cytoplasm. It catalyses the reaction 7-phospho-2-dehydro-3-deoxy-D-arabino-heptonate = 3-dehydroquinate + phosphate. It functions in the pathway metabolic intermediate biosynthesis; chorismate biosynthesis; chorismate from D-erythrose 4-phosphate and phosphoenolpyruvate: step 2/7. Its function is as follows. Catalyzes the conversion of 3-deoxy-D-arabino-heptulosonate 7-phosphate (DAHP) to dehydroquinate (DHQ). This Picosynechococcus sp. (strain ATCC 27264 / PCC 7002 / PR-6) (Agmenellum quadruplicatum) protein is 3-dehydroquinate synthase.